Consider the following 377-residue polypeptide: uncharacterized protein (377 aa).

2 consecutive transmembrane segments (helical) span residues 23 to 43 (LKFILIILVVVIVGLLAFIAY) and 251 to 271 (GSFITYGIIDSSYVILSSISY).

The protein resides in the cell membrane. This is an uncharacterized protein from Methanocaldococcus jannaschii (strain ATCC 43067 / DSM 2661 / JAL-1 / JCM 10045 / NBRC 100440) (Methanococcus jannaschii).